The chain runs to 206 residues: Large ribosomal subunit protein uL4 (206 aa).

A disordered region spans residues 62 to 85; it reads KPWRQKGTGRARQGSTRSPQFRGG.

This sequence belongs to the universal ribosomal protein uL4 family. In terms of assembly, part of the 50S ribosomal subunit.

Its function is as follows. One of the primary rRNA binding proteins, this protein initially binds near the 5'-end of the 23S rRNA. It is important during the early stages of 50S assembly. It makes multiple contacts with different domains of the 23S rRNA in the assembled 50S subunit and ribosome. Forms part of the polypeptide exit tunnel. This chain is Large ribosomal subunit protein uL4, found in Rhodospirillum centenum (strain ATCC 51521 / SW).